Reading from the N-terminus, the 92-residue chain is Acylphosphatase (92 aa).

Residues 5 to 92 (RAHVVVSGKV…GEFSGFKIAF (88 aa)) form the Acylphosphatase-like domain. Catalysis depends on residues arginine 20 and asparagine 38.

This sequence belongs to the acylphosphatase family.

The enzyme catalyses an acyl phosphate + H2O = a carboxylate + phosphate + H(+). The chain is Acylphosphatase (acyP) from Pelotomaculum thermopropionicum (strain DSM 13744 / JCM 10971 / SI).